Here is a 596-residue protein sequence, read N- to C-terminus: Lamin-B2 (596 aa).

Residues 1–20 are disordered; it reads MASLPPHAGPATPLSPTRLS. Residues 1–26 form a head region; the sequence is MASLPPHAGPATPLSPTRLSRLQEKE. Thr-12 carries the phosphothreonine modification. Ser-15 carries the post-translational modification Phosphoserine. The region spanning 24 to 380 is the IF rod domain; sequence EKEELRELND…KLLEGEEERL (357 aa). The segment at 27–61 is coil 1A; it reads ELRELNDRLAHYIDRVRALELENDRLLLRISEKEE. Lys-59 carries the N6-acetyllysine; alternate modification. Lys-59 participates in a covalent cross-link: Glycyl lysine isopeptide (Lys-Gly) (interchain with G-Cter in SUMO2); alternate. The segment at 62–73 is linker 1; sequence VTTREVSGIKTL. Residues 74-207 are coil 1B; sequence YESELADARR…AFSKSVFEEE (134 aa). Glycyl lysine isopeptide (Lys-Gly) (interchain with G-Cter in SUMO2) cross-links involve residues Lys-173 and Lys-233. Residues 208-234 are linker 2; sequence VRETRRRHERRLVEVDSSRQQEYDFKM. The interval 235–378 is coil 2; that stretch reads AQALEDLRSQ…YRKLLEGEEE (144 aa). Phosphoserine occurs at positions 294 and 385. Positions 376-440 are disordered; the sequence is EEERLKLSPS…ASRVSSGSRL (65 aa). Residues 379–596 are tail; sequence RLKLSPSPSS…RTTSRGCRLM (218 aa). Residues 382-403 are compositionally biased toward low complexity; sequence LSPSPSSRITISRATSSSSSSS. Thr-391 is a glycosylation site (O-linked (GlcNAc) threonine). Residues Ser-398, Ser-400, and Ser-402 each carry the phosphoserine modification. At Arg-413 the chain carries Omega-N-methylarginine. The Nuclear localization signal signature appears at 415–420; sequence KRRRLE. A compositionally biased stretch (low complexity) spans 425–439; that stretch reads SGSPSRASRVSSGSR. The region spanning 438–559 is the LTD domain; the sequence is SRLAQQTVAT…VKAAKHSSVQ (122 aa). Lys-465 participates in a covalent cross-link: Glycyl lysine isopeptide (Lys-Gly) (interchain with G-Cter in SUMO2). At Ser-473 the chain carries Phosphoserine. A disordered region spans residues 552-596; the sequence is AAKHSSVQGRENGEEEEEEEAEFGEEDLFHQQGDPRTTSRGCRLM. Acidic residues predominate over residues 564–577; that stretch reads GEEEEEEEAEFGEE. The segment covering 585–596 has biased composition (polar residues); the sequence is DPRTTSRGCRLM. Cysteine methyl ester is present on Cys-593. A lipid anchor (S-farnesyl cysteine) is attached at Cys-593. A propeptide spans 594 to 596 (removed in mature form); it reads RLM.

Belongs to the intermediate filament family. As to quaternary structure, dimer. Lamin dimers then assemble into dimeric head-to-tail polymers. Ultimately, two head-to-tail polymers assemble laterally into a protofilament with a uniformly shaped rod of 3.5 nm in diameter. Interacts with TMEM43. B-type lamins undergo a series of modifications, such as farnesylation and phosphorylation. Increased phosphorylation of the lamins occurs before envelope disintegration and probably plays a role in regulating lamin associations. In terms of processing, phosphorylation plays a key role in lamin organization, subcellular localization and nuclear envelope disintegration. Phosphorylation by CDK1 at Ser-15 and Ser-385 at the onset of mitosis drives lamin disassembly and nuclear envelope breakdown. As to expression, germ cell-specific.

The protein localises to the nucleus lamina. Its function is as follows. Lamins are intermediate filament proteins that assemble into a filamentous meshwork, and which constitute the major components of the nuclear lamina, a fibrous layer on the nucleoplasmic side of the inner nuclear membrane. Lamins provide a framework for the nuclear envelope, bridging the nuclear envelope and chromatin, thereby playing an important role in nuclear assembly, chromatin organization, nuclear membrane and telomere dynamics. The structural integrity of the lamina is strictly controlled by the cell cycle, as seen by the disintegration and formation of the nuclear envelope in prophase and telophase, respectively. The chain is Lamin-B2 (Lmnb2) from Mus musculus (Mouse).